The following is a 304-amino-acid chain: Aspartate carbamoyltransferase catalytic subunit (304 aa).

The carbamoyl phosphate site is built by Arg49 and Thr50. Lys77 contributes to the L-aspartate binding site. Carbamoyl phosphate contacts are provided by Arg99, His127, and Gln130. 2 residues coordinate L-aspartate: Arg160 and Arg211. The carbamoyl phosphate site is built by Ala250 and Pro251.

Belongs to the aspartate/ornithine carbamoyltransferase superfamily. ATCase family. As to quaternary structure, heterododecamer (2C3:3R2) of six catalytic PyrB chains organized as two trimers (C3), and six regulatory PyrI chains organized as three dimers (R2).

The enzyme catalyses carbamoyl phosphate + L-aspartate = N-carbamoyl-L-aspartate + phosphate + H(+). Its pathway is pyrimidine metabolism; UMP biosynthesis via de novo pathway; (S)-dihydroorotate from bicarbonate: step 2/3. Functionally, catalyzes the condensation of carbamoyl phosphate and aspartate to form carbamoyl aspartate and inorganic phosphate, the committed step in the de novo pyrimidine nucleotide biosynthesis pathway. This Bacillus velezensis (strain DSM 23117 / BGSC 10A6 / LMG 26770 / FZB42) (Bacillus amyloliquefaciens subsp. plantarum) protein is Aspartate carbamoyltransferase catalytic subunit.